Consider the following 507-residue polypeptide: ATP synthase subunit alpha, chloroplastic (507 aa).

170 to 177 contributes to the ATP binding site; that stretch reads GDRQTGKT.

Belongs to the ATPase alpha/beta chains family. In terms of assembly, F-type ATPases have 2 components, CF(1) - the catalytic core - and CF(0) - the membrane proton channel. CF(1) has five subunits: alpha(3), beta(3), gamma(1), delta(1), epsilon(1). CF(0) has four main subunits: a, b, b' and c.

The protein localises to the plastid. It is found in the chloroplast thylakoid membrane. The catalysed reaction is ATP + H2O + 4 H(+)(in) = ADP + phosphate + 5 H(+)(out). Its function is as follows. Produces ATP from ADP in the presence of a proton gradient across the membrane. The alpha chain is a regulatory subunit. This Vitis vinifera (Grape) protein is ATP synthase subunit alpha, chloroplastic.